A 505-amino-acid chain; its full sequence is N-succinylglutamate 5-semialdehyde dehydrogenase (505 aa).

234-239 (GSAHTG) lines the NAD(+) pocket. Residues E257 and C291 contribute to the active site.

Belongs to the aldehyde dehydrogenase family. AstD subfamily.

The enzyme catalyses N-succinyl-L-glutamate 5-semialdehyde + NAD(+) + H2O = N-succinyl-L-glutamate + NADH + 2 H(+). The protein operates within amino-acid degradation; L-arginine degradation via AST pathway; L-glutamate and succinate from L-arginine: step 4/5. Its function is as follows. Catalyzes the NAD-dependent reduction of succinylglutamate semialdehyde into succinylglutamate. This chain is N-succinylglutamate 5-semialdehyde dehydrogenase, found in Yersinia pseudotuberculosis serotype IB (strain PB1/+).